The primary structure comprises 271 residues: Imidazole glycerol phosphate synthase subunit HisF (271 aa).

Catalysis depends on residues aspartate 12 and aspartate 131.

Belongs to the HisA/HisF family. As to quaternary structure, heterodimer of HisH and HisF.

The protein resides in the cytoplasm. The catalysed reaction is 5-[(5-phospho-1-deoxy-D-ribulos-1-ylimino)methylamino]-1-(5-phospho-beta-D-ribosyl)imidazole-4-carboxamide + L-glutamine = D-erythro-1-(imidazol-4-yl)glycerol 3-phosphate + 5-amino-1-(5-phospho-beta-D-ribosyl)imidazole-4-carboxamide + L-glutamate + H(+). The protein operates within amino-acid biosynthesis; L-histidine biosynthesis; L-histidine from 5-phospho-alpha-D-ribose 1-diphosphate: step 5/9. Functionally, IGPS catalyzes the conversion of PRFAR and glutamine to IGP, AICAR and glutamate. The HisF subunit catalyzes the cyclization activity that produces IGP and AICAR from PRFAR using the ammonia provided by the HisH subunit. This chain is Imidazole glycerol phosphate synthase subunit HisF, found in Methanospirillum hungatei JF-1 (strain ATCC 27890 / DSM 864 / NBRC 100397 / JF-1).